Reading from the N-terminus, the 400-residue chain is Carbamoyl phosphate synthase small chain (400 aa).

The CPSase stretch occupies residues 1–199 (MSNETNANST…PYVIEAEGEA (199 aa)). Ser-66, Gly-250, and Gly-252 together coordinate L-glutamine. One can recognise a Glutamine amidotransferase type-1 domain in the interval 200 to 395 (RHTVVAYDLG…VALMDEDSEN (196 aa)). Cys-278 acts as the Nucleophile in catalysis. Residues Phe-279, Gln-282, Asn-320, Gly-322, and Phe-323 each contribute to the L-glutamine site. Catalysis depends on residues His-368 and Glu-370.

This sequence belongs to the CarA family. Composed of two chains; the small (or glutamine) chain promotes the hydrolysis of glutamine to ammonia, which is used by the large (or ammonia) chain to synthesize carbamoyl phosphate. Tetramer of heterodimers (alpha,beta)4.

It carries out the reaction hydrogencarbonate + L-glutamine + 2 ATP + H2O = carbamoyl phosphate + L-glutamate + 2 ADP + phosphate + 2 H(+). The enzyme catalyses L-glutamine + H2O = L-glutamate + NH4(+). Its pathway is amino-acid biosynthesis; L-arginine biosynthesis; carbamoyl phosphate from bicarbonate: step 1/1. It functions in the pathway pyrimidine metabolism; UMP biosynthesis via de novo pathway; (S)-dihydroorotate from bicarbonate: step 1/3. Functionally, small subunit of the glutamine-dependent carbamoyl phosphate synthetase (CPSase). CPSase catalyzes the formation of carbamoyl phosphate from the ammonia moiety of glutamine, carbonate, and phosphate donated by ATP, constituting the first step of 2 biosynthetic pathways, one leading to arginine and/or urea and the other to pyrimidine nucleotides. The small subunit (glutamine amidotransferase) binds and cleaves glutamine to supply the large subunit with the substrate ammonia. The chain is Carbamoyl phosphate synthase small chain from Corynebacterium efficiens (strain DSM 44549 / YS-314 / AJ 12310 / JCM 11189 / NBRC 100395).